The primary structure comprises 1796 residues: U3 small nucleolar RNA-associated protein 10 (1796 aa).

HEAT repeat units follow at residues 586–623 (LDLQAMIPYCVAALSDPAKKVRQAAADLITVLSKSNAE), 656–692 (LLQEIIVPALEESVLDEEHISNVLRSHLQSTKDSATG), 861–898 (DLTTNILNAFLESLQDIPKITTDSPATKRRRTSSSDHS), 983–1021 (DTSVGHGDVLVQCIQKSSSPAVQNSALLLVASLANTAPD), 1052–1089 (QTIKEVIPPLVETFRKSRRNLVTSAAELLSSFVIAYEH), 1161–1198 (QPKPTLAATLFNRNTDDDQDLHKTALKELTLLPKVLSS), 1258–1295 (LSIGEFIKAVENLLDRPSISLRQKVLRTLEVRVDQESN), 1302–1340 (TVLLAFLPQLTAVIRDSDDIAYKHTAVACVDKIAEKYGK), 1344–1383 (EAVAAAATTIAGDCCLGQPDKRLRVMALLCLASLVDVLQD), 1492–1529 (SAVEEYLKLLATVLDKHPSTIIAKHISTLSTIFLSALD), 1711–1748 (DHRKELNAAVLRRLRSPSASVRLAAVRCEQSLTDTLGE), and 1752–1789 (EMLSEMLPYISELQDDDDEDVEKETHRWITKIEAILGE). The disordered stretch occupies residues 881–901 (TTDSPATKRRRTSSSDHSRGV).

It belongs to the HEATR1/UTP10 family. As to quaternary structure, component of the ribosomal small subunit (SSU) processome.

Its subcellular location is the nucleus. The protein localises to the nucleolus. In terms of biological role, involved in nucleolar processing of pre-18S ribosomal RNA. Involved in ribosome biosynthesis. The polypeptide is U3 small nucleolar RNA-associated protein 10 (Pyricularia oryzae (strain 70-15 / ATCC MYA-4617 / FGSC 8958) (Rice blast fungus)).